Consider the following 379-residue polypeptide: Queuine tRNA-ribosyltransferase (379 aa).

Catalysis depends on Asp-94, which acts as the Proton acceptor. Substrate is bound by residues 94–98 (DSGGF), Asp-148, Gln-191, and Gly-218. The segment at 249–255 (GVGSPDS) is RNA binding. Asp-268 functions as the Nucleophile in the catalytic mechanism. Positions 273–277 (TRIAR) are RNA binding; important for wobble base 34 recognition. 4 residues coordinate Zn(2+): Cys-306, Cys-308, Cys-311, and His-337.

Belongs to the queuine tRNA-ribosyltransferase family. Homodimer. Within each dimer, one monomer is responsible for RNA recognition and catalysis, while the other monomer binds to the replacement base PreQ1. Zn(2+) serves as cofactor.

It catalyses the reaction 7-aminomethyl-7-carbaguanine + guanosine(34) in tRNA = 7-aminomethyl-7-carbaguanosine(34) in tRNA + guanine. Its pathway is tRNA modification; tRNA-queuosine biosynthesis. Catalyzes the base-exchange of a guanine (G) residue with the queuine precursor 7-aminomethyl-7-deazaguanine (PreQ1) at position 34 (anticodon wobble position) in tRNAs with GU(N) anticodons (tRNA-Asp, -Asn, -His and -Tyr). Catalysis occurs through a double-displacement mechanism. The nucleophile active site attacks the C1' of nucleotide 34 to detach the guanine base from the RNA, forming a covalent enzyme-RNA intermediate. The proton acceptor active site deprotonates the incoming PreQ1, allowing a nucleophilic attack on the C1' of the ribose to form the product. After dissociation, two additional enzymatic reactions on the tRNA convert PreQ1 to queuine (Q), resulting in the hypermodified nucleoside queuosine (7-(((4,5-cis-dihydroxy-2-cyclopenten-1-yl)amino)methyl)-7-deazaguanosine). This is Queuine tRNA-ribosyltransferase from Bacillus cereus (strain G9842).